The following is a 229-amino-acid chain: Flagellar calcium-binding protein TB-1.7G (229 aa).

A disordered region spans residues 1–25 (GSKNASNPKDGAASKGGKDGKTTAD). The span at 16-25 (GGKDGKTTAD) shows a compositional bias: basic and acidic residues. EF-hand domains are found at residues 44-79 (ESKSRRIELFKQFDTNGTGKLGFREVLDGCYGILKL), 80-115 (DEFTTHLPDIVQRAFDKAKDLGNKVKGVGEEDLVEF), 126-161 (YDIFELTVMFDTMDKDGSLLLELQEFKEALPKLKEW), and 163-198 (VDITDATTVFNEIDTNGSGVVTFDEFSCWAVTKKLQ). Residues D57, N59, T61, K63, and E68 each coordinate Ca(2+). 8 residues coordinate Ca(2+): D139, D141, S143, E150, D176, N178, S180, and E187. The segment at 202–229 (DPDDEENGANEGDGANAGDGVPAAEGSA) is disordered. Low complexity predominate over residues 210-221 (ANEGDGANAGDG).

The protein belongs to the calflagin family.

The protein localises to the cell projection. The protein resides in the cilium. It localises to the flagellum. Its function is as follows. May contribute to the rapid motility of the trypanosomes, playing a role either in flagellar structure or in calcium metabolism. Could alternate between a GDP-bound inactive form to a calcium/GTP-bound active form. This chain is Flagellar calcium-binding protein TB-1.7G, found in Trypanosoma brucei brucei.